Here is a 330-residue protein sequence, read N- to C-terminus: Beta-ketoacyl-[acyl-carrier-protein] synthase III (330 aa).

Active-site residues include cysteine 114 and histidine 255. An ACP-binding region spans residues 256–260; the sequence is QANQR. Asparagine 285 is an active-site residue.

It belongs to the thiolase-like superfamily. FabH family. In terms of assembly, homodimer.

The protein resides in the cytoplasm. It carries out the reaction malonyl-[ACP] + acetyl-CoA + H(+) = 3-oxobutanoyl-[ACP] + CO2 + CoA. The protein operates within lipid metabolism; fatty acid biosynthesis. Its function is as follows. Catalyzes the condensation reaction of fatty acid synthesis by the addition to an acyl acceptor of two carbons from malonyl-ACP. Catalyzes the first condensation reaction which initiates fatty acid synthesis and may therefore play a role in governing the total rate of fatty acid production. Possesses both acetoacetyl-ACP synthase and acetyl transacylase activities. Its substrate specificity determines the biosynthesis of branched-chain and/or straight-chain of fatty acids. The protein is Beta-ketoacyl-[acyl-carrier-protein] synthase III of Trichormus variabilis (strain ATCC 29413 / PCC 7937) (Anabaena variabilis).